A 361-amino-acid chain; its full sequence is MQTYGNPEVTYGWWAGNSVVTNRSGRFIASHVGHTGLICFAAGGSTLWELARYNPEIPMGHQSSLFLAHLASIGIGFDEAGAWTGVGVATIAIVHLILSMVYGGGGLLHGILFDENVEDSEVLQAKKFKLEWNNPDNQTFILGHHLIFMGVACAWFVEWARIHGIYDPALGAIRQVNYNLDLSMIWQRQFDFITIDSLEDVMGGHAFLAFAEITGGAFHIVAGSTPWEDKKLGEWSKFKGSELLSAEAVLSWSLAGIGWMAIVAAFWCASNTTVYPEAWYGEPLQFKFAISPYWVDTGDLSDATAFWGHSARAALTNVHYYLGFFFLQGHFWHALRALGFNFKNVTASIGNEQKATFTIKS.

Transmembrane regions (helical) follow at residues 27 to 47 (FIASHVGHTGLICFAAGGSTL), 93 to 113 (IVHLILSMVYGGGGLLHGILF), 140 to 160 (FILGHHLIFMGVACAWFVEWA), 201 to 221 (VMGGHAFLAFAEITGGAFHIV), 248 to 268 (AVLSWSLAGIGWMAIVAAFWC), and 315 to 335 (LTNVHYYLGFFFLQGHFWHAL).

This sequence belongs to the PsbB/PsbC family. IsiA/Pcb subfamily. As to quaternary structure, the antenna complex consists of divinyl chlorophylls (a and b) and divinyl chlorophyll a/b binding proteins and binds more divinyl chlorophyll b than does the antenna complex from high-light-adapted Prochlorococcus. Requires divinyl chlorophyll a as cofactor. Divinyl chlorophyll b is required as a cofactor.

The protein localises to the cellular thylakoid membrane. Functionally, the antenna complex functions as a light receptor, it captures and delivers excitation energy to photosystems II and I. The Prochlorales pcb genes are not related to higher plant LHCs. The protein is Divinyl chlorophyll a/b light-harvesting protein PcbD (pcbD) of Prochlorococcus marinus (strain SARG / CCMP1375 / SS120).